The sequence spans 440 residues: Streptokinase G (440 aa).

The first 26 residues, 1 to 26 (MKNYLSFGMFALLFALTFGTVNSVQA), serve as a signal peptide directing secretion.

This protein is not a protease, but it activates plasminogen by complexing with it. As a potential virulence factor, it is thought to prevent the formation of effective fibrin barriers around the site of infection, thereby contributing to the invasiveness of the cells. The polypeptide is Streptokinase G (skg) (Streptococcus sp. (strain 19909)).